A 56-amino-acid chain; its full sequence is Conotoxin reg3.9 (56 aa).

The first 8 residues, 1-8 (LLFPLSAL), serve as a signal peptide directing secretion. The tract at residues 1-22 (LLFPLSALPLDGDQPADQPAER) is disordered. Positions 9–40 (PLDGDQPADQPAERMQDISPEQNFWFDLVERG) are excised as a propeptide. 3 disulfides stabilise this stretch: cysteine 41–cysteine 55, cysteine 42–cysteine 53, and cysteine 47–cysteine 56.

Belongs to the conotoxin M superfamily. Expressed by the venom duct.

It localises to the secreted. The chain is Conotoxin reg3.9 from Conus regius (Crown cone).